A 417-amino-acid polypeptide reads, in one-letter code: Gamma-glutamyl phosphate reductase (417 aa).

It belongs to the gamma-glutamyl phosphate reductase family.

It is found in the cytoplasm. The enzyme catalyses L-glutamate 5-semialdehyde + phosphate + NADP(+) = L-glutamyl 5-phosphate + NADPH + H(+). It functions in the pathway amino-acid biosynthesis; L-proline biosynthesis; L-glutamate 5-semialdehyde from L-glutamate: step 2/2. In terms of biological role, catalyzes the NADPH-dependent reduction of L-glutamate 5-phosphate into L-glutamate 5-semialdehyde and phosphate. The product spontaneously undergoes cyclization to form 1-pyrroline-5-carboxylate. This is Gamma-glutamyl phosphate reductase from Erwinia tasmaniensis (strain DSM 17950 / CFBP 7177 / CIP 109463 / NCPPB 4357 / Et1/99).